Reading from the N-terminus, the 860-residue chain is Leucine--tRNA ligase (860 aa).

A 'HIGH' region motif is present at residues 42–52; it reads PYPSGRLHMGH. The short motif at 619 to 623 is the 'KMSKS' region element; sequence KMSKS. Residue K622 participates in ATP binding.

It belongs to the class-I aminoacyl-tRNA synthetase family.

The protein localises to the cytoplasm. It carries out the reaction tRNA(Leu) + L-leucine + ATP = L-leucyl-tRNA(Leu) + AMP + diphosphate. In Yersinia pseudotuberculosis serotype O:3 (strain YPIII), this protein is Leucine--tRNA ligase.